A 190-amino-acid chain; its full sequence is Dynein axonemal light chain 1 (190 aa).

LRR repeat units follow at residues 49–70 (VCEK…NGLK), 71–92 (NLKI…EAVG), 94–115 (SLEE…HVLK), and 116–137 (KLKV…NKLQ). Positions 150–190 (NPLEEKHSAEGDWQDRVTKSLKALKKLDGTPIIKNDEEEED) constitute an LRRCT domain.

This sequence belongs to the dynein light chain LC1-type family. In terms of assembly, interacts with DNAH5, a outer arm dynein heavy chain. Interacts with tubulin located within the A-tubule of the outer doublets in a ATP-independent manner.

The protein localises to the cytoplasm. It localises to the cytoskeleton. It is found in the cilium axoneme. In terms of biological role, part of the multisubunit axonemal ATPase complexes that generate the force for cilia motility and govern beat frequency. Component of the outer arm dynein (ODA). May be involved in a mechanosensory feedback mechanism controlling ODA activity based on external conformational cues by tethering the outer arm dynein heavy chain (DNAH5) to the microtubule within the axoneme. This is Dynein axonemal light chain 1 (DNAL1) from Ciona intestinalis (Transparent sea squirt).